The primary structure comprises 463 residues: Thiamine-repressible acid phosphatase pho4 (463 aa).

Positions 1 to 18 are cleaved as a signal peptide; the sequence is MKLSGISLWLLAASIVHA. His-69 acts as the Nucleophile in catalysis. N-linked (GlcNAc...) asparagine glycosylation is found at Asn-98, Asn-104, Asn-186, Asn-221, Asn-251, and Asn-328. Catalysis depends on Asp-341, which acts as the Proton donor. N-linked (GlcNAc...) asparagine glycans are attached at residues Asn-433, Asn-439, and Asn-458.

It belongs to the histidine acid phosphatase family.

The protein localises to the secreted. The protein resides in the cell wall. It carries out the reaction a phosphate monoester + H2O = an alcohol + phosphate. Functionally, may dephosphorylate thiamine phosphates. The protein is Thiamine-repressible acid phosphatase pho4 (pho4) of Schizosaccharomyces pombe (strain 972 / ATCC 24843) (Fission yeast).